The sequence spans 194 residues: Ferredoxin, apicoplast (194 aa).

An apicoplast-targeting transit peptide spans 1-19; that stretch reads MNIVILLLILTFSIKHSNT. The 2Fe-2S ferredoxin-type domain maps to 99 to 189; the sequence is YNITLRTNDG…DCVIETHKED (91 aa). Residues C135, C140, C143, and C173 each coordinate [2Fe-2S] cluster.

Belongs to the 2Fe2S plant-type ferredoxin family. [2Fe-2S] cluster serves as cofactor.

Its subcellular location is the plastid. It localises to the apicoplast. Its function is as follows. Ferredoxins are iron-sulfur proteins that transfer electrons in a wide variety of metabolic reactions. By transferring electrons to 4-hydroxy-3-methylbut-2-enyl diphosphate reductase LytB/IspH, plays a role in the terminal step of the DOXP/MEP pathway for isoprenoid precursor biosynthesis. This chain is Ferredoxin, apicoplast, found in Plasmodium falciparum (isolate 3D7).